We begin with the raw amino-acid sequence, 141 residues long: Large ribosomal subunit protein uL11 (141 aa).

It belongs to the universal ribosomal protein uL11 family. In terms of assembly, part of the ribosomal stalk of the 50S ribosomal subunit. Interacts with L10 and the large rRNA to form the base of the stalk. L10 forms an elongated spine to which L12 dimers bind in a sequential fashion forming a multimeric L10(L12)X complex. One or more lysine residues are methylated.

Forms part of the ribosomal stalk which helps the ribosome interact with GTP-bound translation factors. In Streptococcus thermophilus (strain CNRZ 1066), this protein is Large ribosomal subunit protein uL11.